The following is a 174-amino-acid chain: C-type lectin domain family 2 member A (174 aa).

The Cytoplasmic portion of the chain corresponds to 1–27 (MINPELRDGRADGFIHRIVPKLIQNWK). Residues 28–48 (IGLMCFLSIIITTVCIIMIAT) traverse the membrane as a helical; Signal-anchor for type II membrane protein segment. At 49 to 174 (WSKHAKPVAC…WICSKPKYFL (126 aa)) the chain is on the extracellular side. A disulfide bridge connects residues C58 and C69. Residues 65 to 174 (VRDKCFYFSD…WICSKPKYFL (110 aa)) enclose the C-type lectin domain. N-linked (GlcNAc...) asparagine glycosylation is found at N78, N130, and N143. Residues C86 and C167 are joined by a disulfide bond.

As to quaternary structure, homodimer; non-disulfide-linked. Interacts with KLRB1. Interacts with KLRF2. In terms of processing, N-glycosylated. In terms of tissue distribution, mainly expressed in skin. Also expressed in keratinocytes, spleen, thymus, small intestine, peripheral blood monocytes, bone marrow, ovary, testis and skin. High expression in CD8(+), B-lymphocytes and naive CD4(+) T-cells. Restricted mostly to proliferating lymphocytes. Not detected in myeloid leukocytes or natural killer (NK) cells.

Its subcellular location is the cell membrane. In terms of biological role, membrane-bound protein expressed mainly on keratinocytes which acts as a ligand to stimulate the activating receptor NKp65/KLRF2, expressed on the surface of natural killer (NK) cells. Facilitates thereby dedicated immune recognition of keratinocytes leading to natural killer cell mediated cytotoxicity. Also plays a role in modulating the extent of T-cell expansion. The polypeptide is C-type lectin domain family 2 member A (CLEC2A) (Homo sapiens (Human)).